The primary structure comprises 177 residues: Large ribosomal subunit protein uL6 (177 aa).

The protein belongs to the universal ribosomal protein uL6 family. Part of the 50S ribosomal subunit.

Functionally, this protein binds to the 23S rRNA, and is important in its secondary structure. It is located near the subunit interface in the base of the L7/L12 stalk, and near the tRNA binding site of the peptidyltransferase center. This Acinetobacter baylyi (strain ATCC 33305 / BD413 / ADP1) protein is Large ribosomal subunit protein uL6.